A 364-amino-acid polypeptide reads, in one-letter code: Probable G-protein coupled receptor AH9.4 (364 aa).

A topological domain (extracellular) is located at residue methionine 1. Residues 2-22 (AFLQSAYLVMVFTVPIAGVIL) form a helical membrane-spanning segment. Over 23–48 (NTYVLRKLIRVARKSVVRFETTSGLP) the chain is Cytoplasmic. Residues 49–69 (LAAMSVGDSITLCALLMQAIF) form a helical membrane-spanning segment. Over 70–89 (HITPKGEVPTVVLSSICKFG) the chain is Extracellular. The helical transmembrane segment at 90–110 (IFLIHSTSAFSVWCWFFLSVL) threads the bilayer. Residues 111–130 (RYIAVFHPFKYRTIWRQPRN) are Cytoplasmic-facing. The chain crosses the membrane as a helical span at residues 131-151 (ALKFLAGAVGMFQIYTLIFVT). At 152–177 (YRQEEKSCGEYDVFHESAFKHVHLLD) the chain is on the extracellular side. Residues 178–198 (IFLFYAIPSLLRITLDFLVLI) traverse the membrane as a helical segment. At 199–277 (HCYSPFSVEG…KKKTAMVMRS (79 aa)) the chain is on the cytoplasmic side. The helical transmembrane segment at 278–298 (ILISVLNLLLNLPSHIFRAWA) threads the bilayer. At 299–315 (SYDESSLENEIVRTLEP) the chain is on the extracellular side. A helical membrane pass occupies residues 316–336 (IAQMMYFSQFACNAFYLATSI). The Cytoplasmic segment spans residues 337–364 (YETNGSPRNTVISSSNRHVSRCISDDEA).

This sequence belongs to the G-protein coupled receptor 1 family.

The protein localises to the cell membrane. In terms of biological role, not known. Putative receptor. The sequence is that of Probable G-protein coupled receptor AH9.4 from Caenorhabditis elegans.